The primary structure comprises 66 residues: Large ribosomal subunit protein uL29 (66 aa).

It belongs to the universal ribosomal protein uL29 family.

In Lachnospira eligens (strain ATCC 27750 / DSM 3376 / VPI C15-48 / C15-B4) (Eubacterium eligens), this protein is Large ribosomal subunit protein uL29.